A 144-amino-acid chain; its full sequence is Putative pre-16S rRNA nuclease (144 aa).

It belongs to the YqgF nuclease family.

It is found in the cytoplasm. Could be a nuclease involved in processing of the 5'-end of pre-16S rRNA. This chain is Putative pre-16S rRNA nuclease, found in Lacticaseibacillus casei (strain BL23) (Lactobacillus casei).